Consider the following 487-residue polypeptide: Betaine aldehyde dehydrogenase 1 (487 aa).

Residues S26, I27, and D93 each coordinate K(+). 150–152 lines the NAD(+) pocket; the sequence is GAW. The active-site Charge relay system is K162. NAD(+)-binding positions include 176 to 179 and 229 to 232; these read KPSE and SVPT. L244 is a K(+) binding site. E250 functions as the Proton acceptor in the catalytic mechanism. NAD(+) contacts are provided by G252, C284, and E384. The active-site Nucleophile is the C284. At C284 the chain carries Cysteine sulfenic acid (-SOH). 2 residues coordinate K(+): K454 and G457. E461 functions as the Charge relay system in the catalytic mechanism.

The protein belongs to the aldehyde dehydrogenase family. In terms of assembly, dimer of dimers. It depends on K(+) as a cofactor.

It catalyses the reaction betaine aldehyde + NAD(+) + H2O = glycine betaine + NADH + 2 H(+). The protein operates within amine and polyamine biosynthesis; betaine biosynthesis via choline pathway; betaine from betaine aldehyde: step 1/1. Its function is as follows. Involved in the biosynthesis of the osmoprotectant glycine betaine. Catalyzes the irreversible oxidation of betaine aldehyde to the corresponding acid. This Rhizobium meliloti (strain 1021) (Ensifer meliloti) protein is Betaine aldehyde dehydrogenase 1.